We begin with the raw amino-acid sequence, 1058 residues long: Carbamoyl phosphate synthase pyrimidine-specific large chain (1058 aa).

The interval methionine 1–glutamate 401 is carboxyphosphate synthetic domain. 12 residues coordinate ATP: arginine 129, arginine 169, glycine 175, glycine 176, glutamine 208, isoleucine 210, glutamate 215, glycine 241, isoleucine 242, histidine 243, glutamine 284, and glutamate 298. In terms of domain architecture, ATP-grasp 1 spans lysine 133 to valine 327. Mg(2+)-binding residues include glutamine 284, glutamate 298, and asparagine 300. Mn(2+) is bound by residues glutamine 284, glutamate 298, and asparagine 300. Residues isoleucine 402 to serine 546 are oligomerization domain. Positions isoleucine 547–lysine 929 are carbamoyl phosphate synthetic domain. The region spanning aspartate 671 to leucine 861 is the ATP-grasp 2 domain. The ATP site is built by arginine 707, serine 746, leucine 748, glutamate 752, glycine 777, valine 778, histidine 779, serine 780, glutamine 820, and glutamate 832. Mg(2+)-binding residues include glutamine 820, glutamate 832, and asparagine 834. 3 residues coordinate Mn(2+): glutamine 820, glutamate 832, and asparagine 834. The region spanning leucine 930–leucine 1058 is the MGS-like domain. The tract at residues leucine 930–leucine 1058 is allosteric domain.

This sequence belongs to the CarB family. In terms of assembly, composed of two chains; the small (or glutamine) chain promotes the hydrolysis of glutamine to ammonia, which is used by the large (or ammonia) chain to synthesize carbamoyl phosphate. Tetramer of heterodimers (alpha,beta)4. Mg(2+) is required as a cofactor. Mn(2+) serves as cofactor.

It carries out the reaction hydrogencarbonate + L-glutamine + 2 ATP + H2O = carbamoyl phosphate + L-glutamate + 2 ADP + phosphate + 2 H(+). It catalyses the reaction hydrogencarbonate + NH4(+) + 2 ATP = carbamoyl phosphate + 2 ADP + phosphate + 2 H(+). The protein operates within amino-acid biosynthesis; L-arginine biosynthesis; carbamoyl phosphate from bicarbonate: step 1/1. Its pathway is pyrimidine metabolism; UMP biosynthesis via de novo pathway; (S)-dihydroorotate from bicarbonate: step 1/3. Functionally, small subunit of the glutamine-dependent carbamoyl phosphate synthetase (CPSase). CPSase catalyzes the formation of carbamoyl phosphate from the ammonia moiety of glutamine, carbonate, and phosphate donated by ATP, constituting the first step of the biosynthetic pathway leading to pyrimidine nucleotides. The large subunit (synthetase) binds the substrates ammonia (free or transferred from glutamine from the small subunit), hydrogencarbonate and ATP and carries out an ATP-coupled ligase reaction, activating hydrogencarbonate by forming carboxy phosphate which reacts with ammonia to form carbamoyl phosphate. This is Carbamoyl phosphate synthase pyrimidine-specific large chain (pyrAB) from Lactiplantibacillus plantarum (strain ATCC BAA-793 / NCIMB 8826 / WCFS1) (Lactobacillus plantarum).